A 324-amino-acid chain; its full sequence is Probable nicotianamine synthase 4 (324 aa).

Belongs to the nicotianamine synthase (NAS)-like family.

The catalysed reaction is 3 S-adenosyl-L-methionine = nicotianamine + 3 S-methyl-5'-thioadenosine + 3 H(+). In terms of biological role, synthesizes nicotianamine, a polyamine which serves as a sensor for the physiological iron status within the plant, and/or might be involved in the transport of iron. This Arabidopsis thaliana (Mouse-ear cress) protein is Probable nicotianamine synthase 4 (NAS4).